A 266-amino-acid polypeptide reads, in one-letter code: Large ribosomal subunit protein uL4 (266 aa).

It belongs to the universal ribosomal protein uL4 family. Part of the 50S ribosomal subunit.

One of the primary rRNA binding proteins, this protein initially binds near the 5'-end of the 23S rRNA. It is important during the early stages of 50S assembly. It makes multiple contacts with different domains of the 23S rRNA in the assembled 50S subunit and ribosome. Functionally, forms part of the polypeptide exit tunnel. The sequence is that of Large ribosomal subunit protein uL4 from Sulfolobus acidocaldarius (strain ATCC 33909 / DSM 639 / JCM 8929 / NBRC 15157 / NCIMB 11770).